The chain runs to 301 residues: Thyrotroph embryonic factor (301 aa).

Disordered regions lie at residues 1-70 and 130-174; these read MSDA…ASTM and ESAS…DPSC. Ser30 is modified (phosphoserine). The span at 39–59 shows a compositional bias: basic and acidic residues; sequence KLMENPPRETRLDKEKGKEKL. The segment covering 131–158 has biased composition (low complexity); the sequence is SASSSTASPPSSSTAIFQPSETVSSTES. Positions 231–294 constitute a bZIP domain; the sequence is DEKYWTRRKK…GKCKTIVSKY (64 aa). Positions 233–253 are basic motif; the sequence is KYWTRRKKNNVAAKRSRDARR. Residues 254–261 are leucine-zipper; that stretch reads LKENQITI.

This sequence belongs to the bZIP family. PAR subfamily. In terms of assembly, binds DNA as a homodimer or a heterodimer. Can form a heterodimer with DBP. Isoform Alpha and isoform Beta are expressed at high levels in lung, bladder, kidney, gut and brain.

Its subcellular location is the nucleus. Functionally, transcription factor that binds to and transactivates the TSHB promoter. Binds to a minimal DNA-binding sequence 5'-[TC][AG][AG]TTA[TC][AG]-3'. Also activates the telokin promoter in smooth muscle-specific and calcium-dependent manner. This chain is Thyrotroph embryonic factor (Tef), found in Mus musculus (Mouse).